The following is a 263-amino-acid chain: Small ribosomal subunit protein eS4 (263 aa).

Residues 42–104 (LPLIIFLRNR…TGEHFRLVYD (63 aa)) form the S4 RNA-binding domain.

This sequence belongs to the eukaryotic ribosomal protein eS4 family. As to quaternary structure, component of the small ribosomal subunit.

The protein resides in the cytoplasm. Component of the small ribosomal subunit. The ribosome is a large ribonucleoprotein complex responsible for the synthesis of proteins in the cell. In Xenopus tropicalis (Western clawed frog), this protein is Small ribosomal subunit protein eS4 (rps4).